A 326-amino-acid polypeptide reads, in one-letter code: Olfactory receptor 11H12 (326 aa).

The Extracellular segment spans residues 1–44; the sequence is MCPLTLQVTGLMNVSEPNSSFAFVNEFILQGFTCEWTIQIFLFS. Residues asparagine 13 and asparagine 18 are each glycosylated (N-linked (GlcNAc...) asparagine). The helical transmembrane segment at 45 to 65 threads the bilayer; the sequence is LFTTTYALTITGNGAIAFVLW. Topologically, residues 66–72 are cytoplasmic; it reads CDWRLHT. A helical transmembrane segment spans residues 73–93; the sequence is PMYMFLGNFSFLEIWYVSSTV. The Extracellular portion of the chain corresponds to 94-112; that stretch reads PKMLVNFLSEKKNISFAGC. Residue asparagine 106 is glycosylated (N-linked (GlcNAc...) asparagine). An intrachain disulfide couples cysteine 112 to cysteine 194. The helical transmembrane segment at 113 to 133 threads the bilayer; that stretch reads FLQFYFFFSLGTSECLLLTVM. The Cytoplasmic portion of the chain corresponds to 134–158; sequence AFDQYLAICRPLLYPNIMTGHLCAK. The chain crosses the membrane as a helical span at residues 159-179; it reads LVILCWVCGFLWFLIPIVLIS. The Extracellular segment spans residues 180–216; the sequence is QMPFCGPNIIDHVVCDPGPRFALDCVSAPRIQLFCYT. Residues 217–237 traverse the membrane as a helical segment; the sequence is LSSLVIFGNFLFIIGSYTLVL. Residues 238 to 259 lie on the Cytoplasmic side of the membrane; the sequence is KAVLGMPSSTGRHKAFSTCGSH. Residues 260–280 traverse the membrane as a helical segment; that stretch reads LAVVSLCYSSLMVMYVSPGLG. Over 281–287 the chain is Extracellular; it reads HSTGMQK. The chain crosses the membrane as a helical span at residues 288–308; it reads IETLFYAMVTPLFNPLIYSLQ. Residues 309 to 326 lie on the Cytoplasmic side of the membrane; sequence NKEIKAALRKVLGSSNII.

Belongs to the G-protein coupled receptor 1 family.

Its subcellular location is the cell membrane. Functionally, odorant receptor. The chain is Olfactory receptor 11H12 (OR11H12) from Homo sapiens (Human).